The following is a 427-amino-acid chain: Acetylornithine aminotransferase (427 aa).

Positions 1 to 23 (MSLQTLIEQATNPPESGSAASSP) are disordered. Pyridoxal 5'-phosphate-binding positions include 124–125 (GA) and Phe-157. Arg-160 lines the N(2)-acetyl-L-ornithine pocket. 248-251 (DEVQ) contributes to the pyridoxal 5'-phosphate binding site. Lys-277 is modified (N6-(pyridoxal phosphate)lysine). Residue Ser-304 participates in N(2)-acetyl-L-ornithine binding. Residue Thr-305 coordinates pyridoxal 5'-phosphate.

Belongs to the class-III pyridoxal-phosphate-dependent aminotransferase family. ArgD subfamily. In terms of assembly, homodimer. It depends on pyridoxal 5'-phosphate as a cofactor.

The protein resides in the cytoplasm. The enzyme catalyses N(2)-acetyl-L-ornithine + 2-oxoglutarate = N-acetyl-L-glutamate 5-semialdehyde + L-glutamate. Its pathway is amino-acid biosynthesis; L-arginine biosynthesis; N(2)-acetyl-L-ornithine from L-glutamate: step 4/4. This chain is Acetylornithine aminotransferase, found in Nostoc sp. (strain PCC 7120 / SAG 25.82 / UTEX 2576).